Reading from the N-terminus, the 189-residue chain is MSEINKELIEHAVRDILKAIGEDPDREGLLDTPKRVAKMYEEVFSGLNEDPKEHFKTIFGEDHEELVLVKDIAFHSMCEHHLVPFYGKAHVAYIPRGGKVTGLSKLARAVEAVAKRPQLQERITSTIADSMVETLNPHGVMIVVEAEHMCMTMRGVKKPGAKTVTSAVRGTFANDAAARAEVLSFIKND.

3 residues coordinate Zn(2+): Cys78, His81, and Cys150.

The protein belongs to the GTP cyclohydrolase I family. As to quaternary structure, toroid-shaped homodecamer, composed of two pentamers of five dimers.

The enzyme catalyses GTP + H2O = 7,8-dihydroneopterin 3'-triphosphate + formate + H(+). It functions in the pathway cofactor biosynthesis; 7,8-dihydroneopterin triphosphate biosynthesis; 7,8-dihydroneopterin triphosphate from GTP: step 1/1. This is GTP cyclohydrolase 1 from Bacillus pumilus (strain SAFR-032).